Reading from the N-terminus, the 349-residue chain is tRNA pseudouridine synthase D (349 aa).

Phenylalanine 27 provides a ligand contact to substrate. Aspartate 80 serves as the catalytic Nucleophile. Residue asparagine 129 participates in substrate binding. The 149-residue stretch at 155–303 folds into the TRUD domain; the sequence is GVPNYFGPQR…VEAARRAMLL (149 aa). Substrate is bound at residue phenylalanine 329.

Belongs to the pseudouridine synthase TruD family.

The enzyme catalyses uridine(13) in tRNA = pseudouridine(13) in tRNA. Responsible for synthesis of pseudouridine from uracil-13 in transfer RNAs. The chain is tRNA pseudouridine synthase D from Cronobacter sakazakii (strain ATCC BAA-894) (Enterobacter sakazakii).